Consider the following 230-residue polypeptide: Ribosomal RNA large subunit methyltransferase E (230 aa).

G76, W78, D99, D115, and D139 together coordinate S-adenosyl-L-methionine. Catalysis depends on K179, which acts as the Proton acceptor.

The protein belongs to the class I-like SAM-binding methyltransferase superfamily. RNA methyltransferase RlmE family.

It is found in the cytoplasm. It carries out the reaction uridine(2552) in 23S rRNA + S-adenosyl-L-methionine = 2'-O-methyluridine(2552) in 23S rRNA + S-adenosyl-L-homocysteine + H(+). Specifically methylates the uridine in position 2552 of 23S rRNA at the 2'-O position of the ribose in the fully assembled 50S ribosomal subunit. This Nitrobacter winogradskyi (strain ATCC 25391 / DSM 10237 / CIP 104748 / NCIMB 11846 / Nb-255) protein is Ribosomal RNA large subunit methyltransferase E.